A 49-amino-acid polypeptide reads, in one-letter code: Large ribosomal subunit protein bL33 (49 aa).

This sequence belongs to the bacterial ribosomal protein bL33 family.

This is Large ribosomal subunit protein bL33 from Alkaliphilus metalliredigens (strain QYMF).